The primary structure comprises 370 residues: Chaperone protein DnaJ (370 aa).

Residues 5–69 (DYYEVLGVDR…QKKAHYDQFG (65 aa)) enclose the J domain. A CR-type zinc finger spans residues 128–210 (GKETTIEIPR…CGGKGKVRKR (83 aa)). Residues cysteine 141, cysteine 144, cysteine 158, cysteine 161, cysteine 184, cysteine 187, cysteine 198, and cysteine 201 each coordinate Zn(2+). CXXCXGXG motif repeat units lie at residues 141–148 (CHTCSGSG), 158–165 (CPHCGGSG), 184–191 (CHHCEGTG), and 198–205 (CATCGGKG).

Belongs to the DnaJ family. As to quaternary structure, homodimer. The cofactor is Zn(2+).

It localises to the cytoplasm. Functionally, participates actively in the response to hyperosmotic and heat shock by preventing the aggregation of stress-denatured proteins and by disaggregating proteins, also in an autonomous, DnaK-independent fashion. Unfolded proteins bind initially to DnaJ; upon interaction with the DnaJ-bound protein, DnaK hydrolyzes its bound ATP, resulting in the formation of a stable complex. GrpE releases ADP from DnaK; ATP binding to DnaK triggers the release of the substrate protein, thus completing the reaction cycle. Several rounds of ATP-dependent interactions between DnaJ, DnaK and GrpE are required for fully efficient folding. Also involved, together with DnaK and GrpE, in the DNA replication of plasmids through activation of initiation proteins. The protein is Chaperone protein DnaJ of Halalkalibacterium halodurans (strain ATCC BAA-125 / DSM 18197 / FERM 7344 / JCM 9153 / C-125) (Bacillus halodurans).